A 205-amino-acid chain; its full sequence is Nuclear transcription factor Y subunit beta (205 aa).

Positions 1 to 50 (MDGDSSTTDASQLGIAGDYIGGSHYVIQPHDDTEDSMNDHEDTNGSKESF) are a domain. A disordered region spans residues 24 to 50 (HYVIQPHDDTEDSMNDHEDTNGSKESF). A compositionally biased stretch (basic and acidic residues) spans 37–50 (MNDHEDTNGSKESF). The segment at 51 to 140 (REQDIYLPIA…PLKLYLQKFR (90 aa)) is b domain. A DNA-binding region spans residues 57–63 (LPIANVA). Residues 84–95 (VQECVSEFISFI) are subunit association domain (SAD). Positions 141–201 (EAMKGEKGIG…SYQQISGVQQ (61 aa)) are c domain.

The protein belongs to the NFYB/HAP3 subunit family. As to quaternary structure, heterotrimeric transcription factor composed of three components, NF-YA, NF-YB and NF-YC. NF-YB and NF-YC must interact and dimerize for NF-YA association and DNA binding.

Its subcellular location is the nucleus. Component of the sequence-specific heterotrimeric transcription factor (NF-Y) which specifically recognizes a 5'-CCAAT-3' box motif found in the promoters of its target genes. NF-Y can function as both an activator and a repressor, depending on its interacting cofactors. The sequence is that of Nuclear transcription factor Y subunit beta (NFYB) from Gallus gallus (Chicken).